Consider the following 1248-residue polypeptide: Period circadian protein homolog 2 (1248 aa).

A disordered region spans residues 1-57 (MNGYVEFSPSPTKESVEPQPSQAVLQEDVDMSSGSSGHENCSMGRDSQGSDCDDNGK). Polar residues-rich tracts occupy residues 9-24 (PSPT…SQAV) and 32-50 (SSGS…SQGS). Positions 105 to 114 (LIRTLRELKV) match the Nuclear export signal 1 motif. The region spanning 175-242 (ITSEYIVKNA…FHSYTTPYKL (68 aa)) is the PAS 1 domain. The short motif at 302-306 (LCCLL) is the LXXLL element. The region spanning 315–381 (YEAPRIPPEK…MLAIHKKILQ (67 aa)) is the PAS 2 domain. The region spanning 389–432 (YSPIRFRARNGEYITLDTSWSSFINPWSRKISFIIGRHKVRVGP) is the PAC domain. The Nuclear export signal 2 motif lies at 456–465 (LTEQIHRLLM). 2 disordered regions span residues 467–563 (PVPH…SLPK) and 619–638 (VSPG…VSSH). The segment at 474-478 (SGYGS) is important for protein stability. The interval 506-706 (RKSGISKNGS…GAPGGLSQEK (201 aa)) is CSNK1E binding domain. The segment covering 510 to 521 (ISKNGSKTQTRS) has biased composition (polar residues). Phosphoserine occurs at positions 521, 524, 527, and 540. Positions 523–534 (FSHESGEQKEIA) are enriched in basic and acidic residues. Ser656, Ser690, Ser694, Ser703, and Ser755 each carry phosphoserine. Disordered regions lie at residues 675–708 (DKKP…EKGP) and 751–829 (RAQA…PSAP). The short motif at 773–789 (KKTGKNRKLKSKRVKTR) is the Nuclear localization signal element. Residues 774–787 (KTGKNRKLKSKRVK) are compositionally biased toward basic residues. Positions 816–827 (SPSDTSQSSCPS) are enriched in low complexity. The interaction with PPARG stretch occupies residues 873–1058 (DFAVQPLPLA…DLCSATGSAL (186 aa)). Ser930 carries the post-translational modification Phosphoserine. The segment at 950-971 (TPPAATVTSGRASPPLFQSRGS) is disordered. Thr955 is modified (phosphothreonine). Position 962 is a phosphoserine (Ser962). The Nuclear export signal 3 signature appears at 974 to 981 (LQLNLLQL). Residues 984–1035 (APEGSTGAAGTSGTTGTAAAGLDCTPGTSRDRQPKAPSTCKEPSDTQNSDAL) form a disordered region. A compositionally biased stretch (low complexity) spans 987–1004 (GSTGAAGTSGTTGTAAAG). The LXXLL motif lies at 1042–1046 (LNLLL). The segment covering 1057 to 1080 (ALSGSGASATSDSLGSGSLGCDAS) has biased composition (low complexity). The interval 1057–1113 (ALSGSGASATSDSLGSGSLGCDASRSGAGSSDTSHTSKYFGSIDSSENNHKAKVSTD) is disordered. Polar residues predominate over residues 1083 to 1102 (GAGSSDTSHTSKYFGSIDSS). The span at 1103 to 1112 (ENNHKAKVST) shows a compositional bias: basic and acidic residues. Residue Ser1117 is modified to Phosphoserine. The segment at 1148–1248 (SRDLESVLRE…LTGPRIEAQT (101 aa)) is CRY binding domain. The disordered stretch occupies residues 1215–1248 (PYEEDSPSPGLCDTSEAKEEEGEQLTGPRIEAQT).

In terms of assembly, homodimer. Component of the circadian core oscillator, which includes the CRY proteins, CLOCK or NPAS2, BMAL1 or BMAL2, CSNK1D and/or CSNK1E, TIMELESS, and the PER proteins. Interacts with CLOCK-BMAL1 (off DNA). Interacts with BMAL2. Interacts directly with PER1 and PER3, and through a C-terminal domain, with CRY1 and CRY2. Interacts (via PAS 2 domain) with TIMELESS. Interacts with NFIL3. Different large complexes have been identified with different repressive functions. The core of PER complexes is composed of at least PER1, PER2, PER3, CRY1, CRY2, CSNK1D and/or CSNK1E. The large PER complex involved in the repression of transcriptional termination is composed of at least PER2, CDK9, DDX5, DHX9, NCBP1 and POLR2A (active). The large PER complex involved in the histone deacetylation is composed of at least HDAC1, PER2, SFPQ and SIN3A. The large PER complex involved in the histone methylation is composed of at least PER2, CBX3, TRIM28, SUV39H1 and/or SUV39H2; CBX3 mediates the formation of the complex. Interacts with SETX; the interaction inhibits termination of circadian target genes. Interacts with the nuclear receptors HNF4A, NR1D1, NR4A2, RORA, PPARA, PPARG and THRA; the interaction with at least PPARG is ligand dependent. Interacts with PML. Interacts (phosphorylated) with BTRC and FBXW11; the interactions trigger proteasomal degradation. Interacts with NONO and SFPQ. Interacts with PRKCDBP. Interacts with MAGEL2. Interacts with MAP1LC3B. Interacts with HNF4A. Acetylated. Deacetylated by SIRT1, resulting in decreased protein stability. Deacetylated by SIRT6, preventing its degradation by the proteasome, resulting in increased protein stability. In terms of processing, phosphorylated by CSNK1E and CSNK1D. Phosphorylation results in PER2 protein degradation. May be dephosphorylated by PP1. Post-translationally, ubiquitinated, leading to its proteasomal degradation. Ubiquitination may be inhibited by CRY1. Expressed in the brain, mainly in the suprachiasmatic nucleus (SCN). Expression also found in the harderian gland, lung, eye, intestine, liver and skeletal muscle.

The protein resides in the nucleus. Its subcellular location is the cytoplasm. It localises to the perinuclear region. Its function is as follows. Transcriptional repressor which forms a core component of the circadian clock. The circadian clock, an internal time-keeping system, regulates various physiological processes through the generation of approximately 24 hour circadian rhythms in gene expression, which are translated into rhythms in metabolism and behavior. It is derived from the Latin roots 'circa' (about) and 'diem' (day) and acts as an important regulator of a wide array of physiological functions including metabolism, sleep, body temperature, blood pressure, endocrine, immune, cardiovascular, and renal function. Consists of two major components: the central clock, residing in the suprachiasmatic nucleus (SCN) of the brain, and the peripheral clocks that are present in nearly every tissue and organ system. Both the central and peripheral clocks can be reset by environmental cues, also known as Zeitgebers (German for 'timegivers'). The predominant Zeitgeber for the central clock is light, which is sensed by retina and signals directly to the SCN. The central clock entrains the peripheral clocks through neuronal and hormonal signals, body temperature and feeding-related cues, aligning all clocks with the external light/dark cycle. Circadian rhythms allow an organism to achieve temporal homeostasis with its environment at the molecular level by regulating gene expression to create a peak of protein expression once every 24 hours to control when a particular physiological process is most active with respect to the solar day. Transcription and translation of core clock components (CLOCK, NPAS2, BMAL1, BMAL2, PER1, PER2, PER3, CRY1 and CRY2) plays a critical role in rhythm generation, whereas delays imposed by post-translational modifications (PTMs) are important for determining the period (tau) of the rhythms (tau refers to the period of a rhythm and is the length, in time, of one complete cycle). A diurnal rhythm is synchronized with the day/night cycle, while the ultradian and infradian rhythms have a period shorter and longer than 24 hours, respectively. Disruptions in the circadian rhythms contribute to the pathology of cardiovascular diseases, cancer, metabolic syndrome and aging. A transcription/translation feedback loop (TTFL) forms the core of the molecular circadian clock mechanism. Transcription factors, CLOCK or NPAS2 and BMAL1 or BMAL2, form the positive limb of the feedback loop, act in the form of a heterodimer and activate the transcription of core clock genes and clock-controlled genes (involved in key metabolic processes), harboring E-box elements (5'-CACGTG-3') within their promoters. The core clock genes: PER1/2/3 and CRY1/2 which are transcriptional repressors form the negative limb of the feedback loop and interact with the CLOCK|NPAS2-BMAL1|BMAL2 heterodimer inhibiting its activity and thereby negatively regulating their own expression. This heterodimer also activates nuclear receptors NR1D1/2 and RORA/B/G, which form a second feedback loop and which activate and repress BMAL1 transcription, respectively. PER1 and PER2 proteins transport CRY1 and CRY2 into the nucleus with appropriate circadian timing, but also contribute directly to repression of clock-controlled target genes through interaction with several classes of RNA-binding proteins, helicases and others transcriptional repressors. PER appears to regulate circadian control of transcription by at least three different modes. First, interacts directly with the CLOCK-BMAL1 at the tail end of the nascent transcript peak to recruit complexes containing the SIN3-HDAC that remodel chromatin to repress transcription. Second, brings H3K9 methyltransferases such as SUV39H1 and SUV39H2 to the E-box elements of the circadian target genes, like PER2 itself or PER1. The recruitment of each repressive modifier to the DNA seems to be very precisely temporally orchestrated by the large PER complex, the deacetylases acting before than the methyltransferases. Additionally, large PER complexes are also recruited to the target genes 3' termination site through interactions with RNA-binding proteins and helicases that may play a role in transcription termination to regulate transcription independently of CLOCK-BMAL1 interactions. Recruitment of large PER complexes to the elongating polymerase at PER and CRY termination sites inhibited SETX action, impeding RNA polymerase II release and thereby repressing transcriptional reinitiation. May propagate clock information to metabolic pathways via the interaction with nuclear receptors. Coactivator of PPARA and corepressor of NR1D1, binds rhythmically at the promoter of nuclear receptors target genes like BMAL1 or G6PC1. Directly and specifically represses PPARG proadipogenic activity by blocking PPARG recruitment to target promoters and thereby transcriptional activation. Required for fatty acid and lipid metabolism, is involved as well in the regulation of circulating insulin levels. Plays an important role in the maintenance of cardiovascular functions through the regulation of NO and vasodilatatory prostaglandins production in aortas. Controls circadian glutamate uptake in synaptic vesicles through the regulation of VGLUT1 expression. May also be involved in the regulation of inflammatory processes. Represses the CLOCK-BMAL1 induced transcription of BHLHE40/DEC1 and ATF4. Negatively regulates the formation of the TIMELESS-CRY1 complex by competing with TIMELESS for binding to CRY1. This Spalax judaei (Judean Mountains blind mole rat) protein is Period circadian protein homolog 2 (PER2).